The chain runs to 217 residues: Uracil-DNA glycosylase (217 aa).

The active-site Proton acceptor is aspartate 62.

This sequence belongs to the uracil-DNA glycosylase (UDG) superfamily. UNG family.

It localises to the cytoplasm. It catalyses the reaction Hydrolyzes single-stranded DNA or mismatched double-stranded DNA and polynucleotides, releasing free uracil.. Functionally, excises uracil residues from the DNA which can arise as a result of misincorporation of dUMP residues by DNA polymerase or due to deamination of cytosine. This Streptococcus equi subsp. zooepidemicus (strain H70) protein is Uracil-DNA glycosylase.